The following is a 271-amino-acid chain: Fork head domain-containing protein FD5 (271 aa).

Positions 12 to 103 form a DNA-binding region, fork-head; sequence QKPPYSYISL…FDMFENGSLL (92 aa).

Expressed in early embryogenesis in 14 symmetrical pairs of segmentally arranged neuroblasts and in developing peripheral nervous system. Also, later in embryogenesis, in a cluster of cells in head region.

The protein resides in the nucleus. In terms of biological role, involved in development during embryogenesis. This is Fork head domain-containing protein FD5 (fd96Cb) from Drosophila melanogaster (Fruit fly).